A 231-amino-acid polypeptide reads, in one-letter code: Orotidine 5'-phosphate decarboxylase (231 aa).

Substrate-binding positions include aspartate 11, lysine 33, 60–69 (DLKFHDIPNT), threonine 120, arginine 181, glutamine 190, glycine 210, and arginine 211. Lysine 62 functions as the Proton donor in the catalytic mechanism.

This sequence belongs to the OMP decarboxylase family. Type 1 subfamily. As to quaternary structure, homodimer.

The enzyme catalyses orotidine 5'-phosphate + H(+) = UMP + CO2. Its pathway is pyrimidine metabolism; UMP biosynthesis via de novo pathway; UMP from orotate: step 2/2. Its function is as follows. Catalyzes the decarboxylation of orotidine 5'-monophosphate (OMP) to uridine 5'-monophosphate (UMP). The polypeptide is Orotidine 5'-phosphate decarboxylase (Shewanella oneidensis (strain ATCC 700550 / JCM 31522 / CIP 106686 / LMG 19005 / NCIMB 14063 / MR-1)).